Reading from the N-terminus, the 84-residue chain is Beta-defensin 119 (84 aa).

Residues M1–G21 form the signal peptide. 3 cysteine pairs are disulfide-bonded: C28–C55, C35–C49, and C39–C56.

It belongs to the beta-defensin family.

The protein localises to the secreted. Functionally, has antibacterial activity. The polypeptide is Beta-defensin 119 (DEFB119) (Hylobates lar (Lar gibbon)).